The following is a 419-amino-acid chain: Effector protein BipC (419 aa).

2 disordered regions span residues 62–94 (VAGS…GLER) and 338–402 (LQSG…AKSQ). 2 stretches are compositionally biased toward basic and acidic residues: residues 71 to 94 (ELAR…GLER) and 380 to 392 (TRDE…REAA).

This sequence belongs to the SctB/SipC family.

It is found in the secreted. The protein is Effector protein BipC (bipC) of Burkholderia pseudomallei (strain 1710b).